Here is a 512-residue protein sequence, read N- to C-terminus: Alpha-amylase (512 aa).

The N-terminal stretch at 1-15 is a signal peptide; it reads MKLFVLIALFGLGFA. 3 disulfide bridges follow: Cys43/Cys101, Cys85/Cys130, and Cys156/Cys175. Residues Asn115, Arg173, and Asp182 each contribute to the Ca(2+) site. Arg210 is a chloride binding site. The active-site Nucleophile is the Asp212. Ca(2+) is bound at residue His216. Residue Glu248 is the Proton donor of the active site. Arg352 contacts chloride. 2 cysteine pairs are disulfide-bonded: Cys394/Cys400 and Cys466/Cys478. Residue Asn496 is glycosylated (N-linked (GlcNAc...) asparagine).

Belongs to the glycosyl hydrolase 13 family. Ca(2+) is required as a cofactor. Requires chloride as cofactor.

Its subcellular location is the secreted. It carries out the reaction Endohydrolysis of (1-&gt;4)-alpha-D-glucosidic linkages in polysaccharides containing three or more (1-&gt;4)-alpha-linked D-glucose units.. Its function is as follows. Catalyzes the hydrolysis of alpha-1,4 glycosidic linkages in starch, glycogen and similar oligosaccharides. The protein is Alpha-amylase of Oryzias latipes (Japanese rice fish).